We begin with the raw amino-acid sequence, 90 residues long: RNA-binding protein Hfq (90 aa).

A Sm domain is found at 9-69; sequence DRFLNHLRVN…ISTIIPSSYV (61 aa).

It belongs to the Hfq family. Homohexamer.

Its function is as follows. RNA chaperone that binds small regulatory RNA (sRNAs) and mRNAs to facilitate mRNA translational regulation in response to envelope stress, environmental stress and changes in metabolite concentrations. Also binds with high specificity to tRNAs. The polypeptide is RNA-binding protein Hfq (Thermotoga sp. (strain RQ2)).